Consider the following 566-residue polypeptide: CTP synthase (566 aa).

The tract at residues 1 to 270 is amidoligase domain; the sequence is MTKFVFVTGG…DGLICDKLRL (270 aa). Ser13 contacts CTP. UTP is bound at residue Ser13. Residues 14 to 19 and Asp71 contribute to the ATP site; that span reads SLGKGI. Positions 71 and 144 each coordinate Mg(2+). CTP-binding positions include 151–153, 191–196, and Lys227; these read DIE and KTKPTQ. UTP contacts are provided by residues 191–196 and Lys227; that span reads KTKPTQ. Residues 295-547 form the Glutamine amidotransferase type-1 domain; it reads SIAMVGKYVD…IAATLEQRSA (253 aa). Gly356 is a binding site for L-glutamine. Cys383 functions as the Nucleophile; for glutamine hydrolysis in the catalytic mechanism. Residues 384 to 387, Glu407, and Arg473 contribute to the L-glutamine site; that span reads LGMQ. Catalysis depends on residues His520 and Glu522.

This sequence belongs to the CTP synthase family. In terms of assembly, homotetramer.

The enzyme catalyses UTP + L-glutamine + ATP + H2O = CTP + L-glutamate + ADP + phosphate + 2 H(+). It carries out the reaction L-glutamine + H2O = L-glutamate + NH4(+). The catalysed reaction is UTP + NH4(+) + ATP = CTP + ADP + phosphate + 2 H(+). Its pathway is pyrimidine metabolism; CTP biosynthesis via de novo pathway; CTP from UDP: step 2/2. Its activity is regulated as follows. Allosterically activated by GTP, when glutamine is the substrate; GTP has no effect on the reaction when ammonia is the substrate. The allosteric effector GTP functions by stabilizing the protein conformation that binds the tetrahedral intermediate(s) formed during glutamine hydrolysis. Inhibited by the product CTP, via allosteric rather than competitive inhibition. Functionally, catalyzes the ATP-dependent amination of UTP to CTP with either L-glutamine or ammonia as the source of nitrogen. Regulates intracellular CTP levels through interactions with the four ribonucleotide triphosphates. This is CTP synthase from Polaromonas naphthalenivorans (strain CJ2).